A 3746-amino-acid polypeptide reads, in one-letter code: N-(5-amino-5-carboxypentanoyl)-L-cysteinyl-D-valine synthase (3746 aa).

The segment at 299–711 (EEVVERHEDK…GRADFQIKLR (413 aa)) is adenylation (A) domain 1. Residues 818 to 895 (DLRGDTEIAL…RMADLLQNKQ (78 aa)) enclose the Carrier 1 domain. Position 855 is an O-(pantetheine 4'-phosphoryl)serine (serine 855). Residues 918–1372 (NIYLANSLQQ…YLSSIQLEQL (455 aa)) are condensation (C) domain 1. An adenylation (A) domain 2 region spans residues 1391–1801 (FENEASQKPD…GRNDFQVKIR (411 aa)). A Carrier 2 domain is found at 1902–1979 (PPRSEIERSL…AQTHLILNDA (78 aa)). At serine 1939 the chain carries O-(pantetheine 4'-phosphoryl)serine. Positions 1994–2434 (QMIPVSRAQE…SELSAEGINE (441 aa)) are condensation (C) domain 2. An adenylation (A) domain 3 region spans residues 2478-2883 (AFLAAEKIAV…GRGDLQIKMR (406 aa)). Positions 2991-3066 (PPRNIIEAKM…ALHDHVFMKD (76 aa)) constitute a Carrier 3 domain. Serine 3026 bears the O-(pantetheine 4'-phosphoryl)serine mark. The epimerase (E) domain stretch occupies residues 3084–3500 (GEAPLLPIQD…NKILDGRASQ (417 aa)). Residues 3530–3732 (TLFLLPPGEG…FSWVGNPQQV (203 aa)) form a thioesterase (TE) domain region.

The protein belongs to the NRP synthetase family. Pantetheine 4'-phosphate serves as cofactor. The cofactor is Mg(2+).

The protein localises to the cytoplasm. The protein resides in the cytosol. Its subcellular location is the vacuole membrane. The catalysed reaction is L-2-aminoadipate + L-valine + L-cysteine + 3 ATP + H2O = N-[(5S)-5-amino-5-carboxypentanoyl]-L-cysteinyl-D-valine + 3 AMP + 3 diphosphate + 3 H(+). The protein operates within antibiotic biosynthesis; penicillin G biosynthesis; penicillin G from L-alpha-aminoadipate and L-cysteine and L-valine: step 1/3. Functionally, nonribosomal peptide synthetase; part of the gene cluster that mediates the biosynthesis of penicillin, the world's most important antibiotic. The trimodular NRPS acvA produces the tripeptide N-[(5S)-5-amino-5-carboxypentanoyl]-L-cysteinyl-D-valine (LLD-ACV or ACV) via condensation of the 3 residues L-2-aminoadipate, L-cysteine and L-valine. The precursor amino acids for penicillin biosynthesis are withdrawn from the vacuolar amino acid pool by the MFS-type transporter penV. Each of the constituent amino acids of the tripeptide ACV are activated as aminoacyl-adenylates with peptide bonds formed through the participation of amino acid thioester intermediates. The penicillin biosynthesis occurs via 3 enzymatic steps, the first corresponding to the production of the tripeptide N-[(5S)-5-amino-5-carboxypentanoyl]-L-cysteinyl-D-valine (LLD-ACV or ACV) by the NRPS acvA. The tripeptide ACV is then cyclized to isopenicillin N (IPN) by the isopenicillin N synthase ipnA that forms the beta-lactam nucleus. Finally, the alpha-aminoadipyl side chain is exchanged for phenylacetic acid by the isopenicillin N acyltransferase aatA to yield penicillin in the peroxisomal matrix. This Penicillium chrysogenum (Penicillium notatum) protein is N-(5-amino-5-carboxypentanoyl)-L-cysteinyl-D-valine synthase.